Consider the following 335-residue polypeptide: Ferredoxin--NADP reductase (335 aa).

FAD contacts are provided by Asp35, Gln43, Tyr48, Ala88, Phe122, Asp287, and Ser328.

The protein belongs to the ferredoxin--NADP reductase type 2 family. In terms of assembly, homodimer. Requires FAD as cofactor.

It catalyses the reaction 2 reduced [2Fe-2S]-[ferredoxin] + NADP(+) + H(+) = 2 oxidized [2Fe-2S]-[ferredoxin] + NADPH. This Thermus thermophilus (strain ATCC BAA-163 / DSM 7039 / HB27) protein is Ferredoxin--NADP reductase.